The sequence spans 214 residues: Probable chemoreceptor glutamine deamidase CheD (214 aa).

It belongs to the CheD family.

It catalyses the reaction L-glutaminyl-[protein] + H2O = L-glutamyl-[protein] + NH4(+). Its function is as follows. Probably deamidates glutamine residues to glutamate on methyl-accepting chemotaxis receptors (MCPs), playing an important role in chemotaxis. The chain is Probable chemoreceptor glutamine deamidase CheD from Vibrio vulnificus (strain CMCP6).